A 194-amino-acid polypeptide reads, in one-letter code: HTH-type transcriptional regulator BetI (194 aa).

The HTH tetR-type domain maps to 8–68; it reads EIRRAQLIDA…ATMRHVLRDL (61 aa). A DNA-binding region (H-T-H motif) is located at residues 31-50; sequence TLASVAQRANISTGIVSHYF.

The protein operates within amine and polyamine biosynthesis; betaine biosynthesis via choline pathway [regulation]. Functionally, repressor involved in the biosynthesis of the osmoprotectant glycine betaine. It represses transcription of the choline transporter BetT and the genes of BetAB involved in the synthesis of glycine betaine. The sequence is that of HTH-type transcriptional regulator BetI from Burkholderia cenocepacia (strain ATCC BAA-245 / DSM 16553 / LMG 16656 / NCTC 13227 / J2315 / CF5610) (Burkholderia cepacia (strain J2315)).